The chain runs to 409 residues: Argininosuccinate synthase (409 aa).

Residues 12-20 (AYSGGLDTS) and Ala-39 contribute to the ATP site. Tyr-90 and Ser-95 together coordinate L-citrulline. Residue Gly-120 coordinates ATP. 3 residues coordinate L-aspartate: Thr-122, Asn-126, and Asp-127. Residue Asn-126 participates in L-citrulline binding. Residues Arg-130, Ser-181, Ser-190, Glu-266, and Tyr-278 each coordinate L-citrulline.

Belongs to the argininosuccinate synthase family. Type 1 subfamily. Homotetramer.

Its subcellular location is the cytoplasm. It catalyses the reaction L-citrulline + L-aspartate + ATP = 2-(N(omega)-L-arginino)succinate + AMP + diphosphate + H(+). It functions in the pathway amino-acid biosynthesis; L-arginine biosynthesis; L-arginine from L-ornithine and carbamoyl phosphate: step 2/3. The chain is Argininosuccinate synthase from Acidiphilium cryptum (strain JF-5).